The chain runs to 310 residues: 4-hydroxyproline 2-epimerase (310 aa).

Catalysis depends on C88, which acts as the Proton acceptor. Residues G89–H90, H208, and D232 each bind substrate. The active-site Proton donor is the C236. G237–T238 contacts substrate.

Belongs to the proline racemase family.

The enzyme catalyses trans-4-hydroxy-L-proline = cis-4-hydroxy-D-proline. Its function is as follows. Catalyzes the epimerization of trans-4-hydroxy-L-proline (t4LHyp) to cis-4-hydroxy-D-proline (c4DHyp). Is likely involved in a degradation pathway that converts t4LHyp to alpha-ketoglutarate. Displays no proline racemase activity. In Acinetobacter baumannii (strain AYE), this protein is 4-hydroxyproline 2-epimerase.